A 102-amino-acid chain; its full sequence is UPF0213 protein Spro_0507 (102 aa).

The GIY-YIG domain maps to 6 to 81 (PTWHLYMLRM…KQLSKTQKER (76 aa)).

Belongs to the UPF0213 family.

In Serratia proteamaculans (strain 568), this protein is UPF0213 protein Spro_0507.